A 72-amino-acid chain; its full sequence is Small ribosomal subunit protein bS18c (72 aa).

The protein belongs to the bacterial ribosomal protein bS18 family. As to quaternary structure, part of the 30S ribosomal subunit.

It is found in the plastid. Its subcellular location is the chloroplast. This chain is Small ribosomal subunit protein bS18c, found in Thalassiosira pseudonana (Marine diatom).